The following is a 101-amino-acid chain: Urease subunit beta (101 aa).

This sequence belongs to the urease beta subunit family. Heterotrimer of UreA (gamma), UreB (beta) and UreC (alpha) subunits. Three heterotrimers associate to form the active enzyme.

The protein localises to the cytoplasm. It catalyses the reaction urea + 2 H2O + H(+) = hydrogencarbonate + 2 NH4(+). The protein operates within nitrogen metabolism; urea degradation; CO(2) and NH(3) from urea (urease route): step 1/1. This Pseudomonas syringae pv. syringae (strain B728a) protein is Urease subunit beta.